The chain runs to 510 residues: NAD(P)H-quinone oxidoreductase subunit 2 B, chloroplastic (510 aa).

13 consecutive transmembrane segments (helical) span residues 24–44 (LLLFHGSFIFPECILIFGLIL), 57–77 (IPWLYFISSTSLVMSITALLF), 99–119 (IFQFLILLCSTLCIPLSVEYI), 124–144 (MAITEFLLFVLTATLGGMFLC), 150–170 (ITIFVAPECFSLCSYLLSGYT), 183–203 (YLLMGGASSSILVHGFSWLYG), 227–247 (PGISIALISITVGIGFKLSPA), 295–315 (WHLLLEILAILSMILGNLIAI), 323–343 (MLAYSSIGQIGYVIIGIIVGD), 347–367 (GYASMITYMLFYISMNLGTFA), 395–415 (ALSSALCLLSLGGLPPLAGFF), 418–438 (LHLFWCGWQAGLYFLVSIGLL), and 484–504 (MIVCVIASTIPGISMNPIIAI).

It belongs to the complex I subunit 2 family. NDH is composed of at least 16 different subunits, 5 of which are encoded in the nucleus.

The protein resides in the plastid. It is found in the chloroplast thylakoid membrane. The catalysed reaction is a plastoquinone + NADH + (n+1) H(+)(in) = a plastoquinol + NAD(+) + n H(+)(out). It catalyses the reaction a plastoquinone + NADPH + (n+1) H(+)(in) = a plastoquinol + NADP(+) + n H(+)(out). NDH shuttles electrons from NAD(P)H:plastoquinone, via FMN and iron-sulfur (Fe-S) centers, to quinones in the photosynthetic chain and possibly in a chloroplast respiratory chain. The immediate electron acceptor for the enzyme in this species is believed to be plastoquinone. Couples the redox reaction to proton translocation, and thus conserves the redox energy in a proton gradient. This chain is NAD(P)H-quinone oxidoreductase subunit 2 B, chloroplastic, found in Chloranthus spicatus (Chulantree).